A 128-amino-acid chain; its full sequence is Small ribosomal subunit protein bS6 (128 aa).

This sequence belongs to the bacterial ribosomal protein bS6 family.

In terms of biological role, binds together with bS18 to 16S ribosomal RNA. This chain is Small ribosomal subunit protein bS6, found in Thermotoga sp. (strain RQ2).